A 153-amino-acid chain; its full sequence is Large ribosomal subunit protein uL22 (153 aa).

This sequence belongs to the universal ribosomal protein uL22 family. Part of the 50S ribosomal subunit.

This protein binds specifically to 23S rRNA. It makes multiple contacts with different domains of the 23S rRNA in the assembled 50S subunit and ribosome. Functionally, the globular domain of the protein is located near the polypeptide exit tunnel on the outside of the subunit, while an extended beta-hairpin is found that lines the wall of the exit tunnel in the center of the 70S ribosome. This is Large ribosomal subunit protein uL22 from Methanoculleus marisnigri (strain ATCC 35101 / DSM 1498 / JR1).